The following is an 876-amino-acid chain: Radial spoke head 10 homolog B (876 aa).

The segment covering 1–16 (MVKEKKKADKKGDKSA) has biased composition (basic and acidic residues). The interval 1–71 (MVKEKKKADK…VQMEQSEEET (71 aa)) is disordered. Residues 17–37 (RSPSSISDNPEASKQDSNASK) are compositionally biased toward polar residues. A compositionally biased stretch (low complexity) spans 39–50 (EVAPSAVVPVVE). MORN repeat units follow at residues 86 to 108 (YEGE…GGNT), 109 to 129 (YHGM…WADG), 132 to 154 (YEGD…DGST), 155 to 172 (YEGE…MFKC), 179 to 196 (YIGH…SIYY), 204 to 225 (YEGD…KSGN), 227 to 244 (YEGQ…RMRW), 251 to 268 (YTGH…THTW), 284 to 305 (YIGE…ASGA), and 307 to 328 (YEGE…KNGH). A compositionally biased stretch (polar residues) spans 356–372 (WSDASQRSRQPRGSSVS). Residues 356–386 (WSDASQRSRQPRGSSVSAVREPETLRKLDGS) form a disordered region. A compositionally biased stretch (basic and acidic residues) spans 375 to 386 (REPETLRKLDGS). Residues 790 to 832 (LKEKVKENQLQEAELAQQRQIENEELEARLNILREEEARKQDF) adopt a coiled-coil conformation. The disordered stretch occupies residues 839-876 (LKEPSEIPASQPLTPSPPKEDLASIQTSKASPGKKKKK).

In terms of assembly, interacts with RSPH6A. Does not appear to be part of the axonemal radial spoke complexes 1 or 2. Expressed in ependymal cells (at protein level).

It is found in the cytoplasm. Its subcellular location is the cytoskeleton. It localises to the cilium axoneme. The protein resides in the cell projection. The protein localises to the cilium. It is found in the flagellum. In terms of biological role, may function as part of the axonemal radial spoke complex 3 (RS3). Radial spoke complexes are important for ciliary motility. In Mus musculus (Mouse), this protein is Radial spoke head 10 homolog B.